Consider the following 102-residue polypeptide: Small ribosomal subunit protein uS10 (102 aa).

This sequence belongs to the universal ribosomal protein uS10 family. In terms of assembly, part of the 30S ribosomal subunit.

Its function is as follows. Involved in the binding of tRNA to the ribosomes. The sequence is that of Small ribosomal subunit protein uS10 from Shouchella clausii (strain KSM-K16) (Alkalihalobacillus clausii).